Consider the following 400-residue polypeptide: Argininosuccinate synthase (400 aa).

8–16 (AYSGGLDTS) provides a ligand contact to ATP. Residue Y87 coordinates L-citrulline. G117 contributes to the ATP binding site. L-aspartate-binding residues include T119, N123, and D124. N123 is an L-citrulline binding site. Positions 127, 175, 260, and 272 each coordinate L-citrulline.

This sequence belongs to the argininosuccinate synthase family. Type 1 subfamily. In terms of assembly, homotetramer.

It is found in the cytoplasm. The enzyme catalyses L-citrulline + L-aspartate + ATP = 2-(N(omega)-L-arginino)succinate + AMP + diphosphate + H(+). It participates in amino-acid biosynthesis; L-arginine biosynthesis; L-arginine from L-ornithine and carbamoyl phosphate: step 2/3. This Mycobacterium sp. (strain JLS) protein is Argininosuccinate synthase.